A 177-amino-acid chain; its full sequence is Large ribosomal subunit protein uL6 (177 aa).

As to quaternary structure, part of the 50S ribosomal subunit.

In terms of biological role, this protein binds to the 23S rRNA, and is important in its secondary structure. It is located near the subunit interface in the base of the L7/L12 stalk, and near the tRNA binding site of the peptidyltransferase center. The protein is Large ribosomal subunit protein uL6 of Rhodopseudomonas palustris (strain ATCC BAA-98 / CGA009).